Reading from the N-terminus, the 971-residue chain is Exportin-2 (971 aa).

An Importin N-terminal domain is found at 29-102; it reads AEKFLESVEG…KANIVNLMLS (74 aa).

The protein belongs to the XPO2/CSE1 family. As to quaternary structure, interacts with cftr.

Its subcellular location is the cytoplasm. The protein resides in the nucleus. Functionally, export receptor for importin alpha. Mediates importin-alpha re-export from the nucleus to the cytoplasm after import substrates have been released into the nucleoplasm. Negatively regulates fluid secretion and plays a role in fluid homeostasis by down-regulating cftr activity. The protein is Exportin-2 (cse1l) of Pagrus major (Red sea bream).